Consider the following 654-residue polypeptide: Pentatricopeptide repeat-containing protein At5g61400 (654 aa).

PPR repeat units lie at residues 37-71 (SSFS…RVSK), 74-104 (DLQS…LIER), 131-161 (SIGV…MKCS), 163-197 (DSKA…GLVP), 198-232 (DVHI…GIKP), 233-267 (NVYI…GVLP), 268-302 (NLYT…ELLP), 303-337 (NVVV…GVDP), 338-372 (NLYV…NLSP), 373-407 (DVFT…RIFP), 408-442 (SSAT…GVEP), 443-477 (NIIT…GIVP), 478-512 (DVVT…GIHP), 513-543 (NDHT…NNQQ), 548-582 (NHVG…GITP), and 583-617 (DICS…GILP).

It belongs to the PPR family. P subfamily.

The sequence is that of Pentatricopeptide repeat-containing protein At5g61400 from Arabidopsis thaliana (Mouse-ear cress).